A 229-amino-acid polypeptide reads, in one-letter code: DNA repair protein RecO (229 aa).

This sequence belongs to the RecO family.

Functionally, involved in DNA repair and RecF pathway recombination. This is DNA repair protein RecO from Legionella pneumophila (strain Lens).